The primary structure comprises 335 residues: Cytoskeleton protein RodZ (335 aa).

Residues 1–111 (MNTEATHDQN…LGKRRKKRDG (111 aa)) lie on the Cytoplasmic side of the membrane. The region spanning 19-71 (LRNAREQLGLSQQAVAERLCLKVSTVRDIEEDKAPADLASTFLRGYIRSYARL) is the HTH cro/C1-type domain. Residues 30-49 (QQAVAERLCLKVSTVRDIEE) constitute a DNA-binding region (H-T-H motif). Residues 112–132 (WLMTFTWLVLFVVIGLSGAWW) form a helical; Signal-anchor for type II membrane protein membrane-spanning segment. Topologically, residues 133–335 (WQDHKAQQEE…TLNAEQSPAQ (203 aa)) are periplasmic. The segment covering 148-164 (DQSSAELNNNQSQSVPL) has biased composition (polar residues). The disordered stretch occupies residues 148–244 (DQSSAELNNN…PLPTDQAGVT (97 aa)). Low complexity-rich tracts occupy residues 165-205 (DTST…DPQQ) and 217-239 (DTAA…LPTD).

The protein belongs to the RodZ family.

Its subcellular location is the cell inner membrane. In terms of biological role, cytoskeletal protein that is involved in cell-shape control through regulation of the length of the long axis. This chain is Cytoskeleton protein RodZ, found in Escherichia coli O81 (strain ED1a).